Here is a 1098-residue protein sequence, read N- to C-terminus: NACHT, LRR and PYD domains-containing protein 5 (1098 aa).

Residues 1–97 (MREAKIAPLS…SEMARDEMKK (97 aa)) enclose the Pyrin domain. The segment at 104-131 (SEDSAPTKTDQGPSMKEVPGPREDPQDS) is disordered. Positions 122–131 (PGPREDPQDS) are enriched in basic and acidic residues. In terms of domain architecture, NACHT spans 180–503 (LTVVLHGPPG…ALFYVLRGVE (324 aa)). 186 to 193 (GPPGVGKS) contacts ATP. 7 LRR repeats span residues 851-871 (GLTH…SLLC), 880-900 (GLQK…GFLA), 908-928 (HLTH…NLLC), 937-958 (PLRD…SLSN), 965-985 (RLRS…AALC), 993-1013 (TLTR…KALS), and 1021-1041 (HLAS…TTLC).

The protein belongs to the NLRP family. As to quaternary structure, component of the subcortical maternal complex (SCMC), at least composed of NLRP5, KHDC3, OOEP, and TLE6. Within the complex, interacts with OOEP, KHDC3 and TLE6. The SCMC may facilitate translocation of its components between the nuclear and cytoplasmic compartments. As part of the SCMC interacts with the SCMC-associated protein ZBED3. As part of the SCMC interacts with the SCMC-associated protein CFL1/Cofilin-1. Interacts with PRKCE. Interacts with TUBB3 at cytoskeleton microtubules. Phosphorylated by PRKCE. In terms of tissue distribution, oocyte-specific.

The protein localises to the cytoplasm. The protein resides in the cytoplasmic vesicle. It localises to the secretory vesicle. Its subcellular location is the cortical granule. It is found in the mitochondrion. The protein localises to the nucleus. The protein resides in the nucleolus. It localises to the golgi apparatus. In terms of biological role, component of the subcortical maternal complex (SCMC), a multiprotein complex that plays a key role in early embryonic development. The SCMC complex is a structural constituent of cytoplasmic lattices, which consist in fibrous structures found in the cytoplasm of oocytes and preimplantation embryos. They are required to store maternal proteins critical for embryonic development, such as proteins that control epigenetic reprogramming of the preimplantation embryo, and prevent their degradation or activation. Required for the localization of cortical granules to the cortex of oocytes, via association with the cortical actin scaffold. Required for cortical actin clearance prior to oocyte exocytosis and prevention of polyspermy. Involved in regulating post-fertilization Ca(2+) release and endoplasmic reticulum storage (ER) storage via regulation of cellular localization. May be involved in the localization of mitochondria to the cytoplasm and perinuclear region in oocytes and early stage embryos, independent of its role in CPL formation. The polypeptide is NACHT, LRR and PYD domains-containing protein 5 (NLRP5) (Bos taurus (Bovine)).